The following is a 201-amino-acid chain: NADH-quinone oxidoreductase subunit C (201 aa).

The protein belongs to the complex I 30 kDa subunit family. As to quaternary structure, NDH-1 is composed of 14 different subunits. Subunits NuoB, C, D, E, F, and G constitute the peripheral sector of the complex.

The protein localises to the cell inner membrane. It carries out the reaction a quinone + NADH + 5 H(+)(in) = a quinol + NAD(+) + 4 H(+)(out). Functionally, NDH-1 shuttles electrons from NADH, via FMN and iron-sulfur (Fe-S) centers, to quinones in the respiratory chain. The immediate electron acceptor for the enzyme in this species is believed to be ubiquinone. Couples the redox reaction to proton translocation (for every two electrons transferred, four hydrogen ions are translocated across the cytoplasmic membrane), and thus conserves the redox energy in a proton gradient. The chain is NADH-quinone oxidoreductase subunit C from Aromatoleum aromaticum (strain DSM 19018 / LMG 30748 / EbN1) (Azoarcus sp. (strain EbN1)).